A 513-amino-acid polypeptide reads, in one-letter code: Lysine--tRNA ligase (513 aa).

2 residues coordinate Mg(2+): Glu422 and Glu429.

Belongs to the class-II aminoacyl-tRNA synthetase family. Homodimer. Mg(2+) serves as cofactor.

It is found in the cytoplasm. The enzyme catalyses tRNA(Lys) + L-lysine + ATP = L-lysyl-tRNA(Lys) + AMP + diphosphate. The polypeptide is Lysine--tRNA ligase (Tolumonas auensis (strain DSM 9187 / NBRC 110442 / TA 4)).